Reading from the N-terminus, the 157-residue chain is Beta-defensin 125 (157 aa).

Positions 1-20 (MNILMLTFIICGLLTQVTKG) are cleaved as a signal peptide. 3 disulfides stabilise this stretch: cysteine 27–cysteine 55, cysteine 35–cysteine 49, and cysteine 39–cysteine 56. The interval 109-157 (GETMTPETNTPETTMPPPETTTPETTMPPSETATSETMPPPSQRALTHN) is disordered. Low complexity-rich tracts occupy residues 110–121 (ETMTPETNTPET) and 129–145 (TTPE…TSET).

This sequence belongs to the beta-defensin family.

It localises to the secreted. Functionally, has antibacterial activity. This chain is Beta-defensin 125 (DEFB125), found in Pan troglodytes (Chimpanzee).